We begin with the raw amino-acid sequence, 445 residues long: Phosphoglucosamine mutase (445 aa).

Catalysis depends on Ser-102, which acts as the Phosphoserine intermediate. Positions 102, 241, 243, and 245 each coordinate Mg(2+). Position 102 is a phosphoserine (Ser-102).

The protein belongs to the phosphohexose mutase family. Mg(2+) is required as a cofactor. In terms of processing, activated by phosphorylation.

The catalysed reaction is alpha-D-glucosamine 1-phosphate = D-glucosamine 6-phosphate. In terms of biological role, catalyzes the conversion of glucosamine-6-phosphate to glucosamine-1-phosphate. The sequence is that of Phosphoglucosamine mutase from Haemophilus influenzae (strain PittEE).